The sequence spans 104 residues: Large ribosomal subunit protein bL21 (104 aa).

It belongs to the bacterial ribosomal protein bL21 family. In terms of assembly, part of the 50S ribosomal subunit. Contacts protein L20.

This protein binds to 23S rRNA in the presence of protein L20. The sequence is that of Large ribosomal subunit protein bL21 from Helicobacter pylori (strain Shi470).